The following is a 350-amino-acid chain: Hydroxymethylglutaryl-CoA synthase (350 aa).

E83 functions as the Proton donor/acceptor in the catalytic mechanism. C115 serves as the catalytic Acyl-thioester intermediate. Residues C115 and T156 each contribute to the (3S)-3-hydroxy-3-methylglutaryl-CoA site. Residue R204 coordinates CoA. 2 residues coordinate (3S)-3-hydroxy-3-methylglutaryl-CoA: T206 and H239. H239 acts as the Proton donor/acceptor in catalysis. A CoA-binding site is contributed by K244. Residues N271 and S301 each contribute to the (3S)-3-hydroxy-3-methylglutaryl-CoA site.

The protein belongs to the thiolase-like superfamily. Archaeal HMG-CoA synthase family. As to quaternary structure, interacts with acetoacetyl-CoA thiolase that catalyzes the precedent step in the pathway and with a DUF35 protein. The acetoacetyl-CoA thiolase/HMG-CoA synthase complex channels the intermediate via a fused CoA-binding site, which allows for efficient coupling of the endergonic thiolase reaction with the exergonic HMGCS reaction.

The catalysed reaction is acetoacetyl-CoA + acetyl-CoA + H2O = (3S)-3-hydroxy-3-methylglutaryl-CoA + CoA + H(+). The protein operates within metabolic intermediate biosynthesis; (R)-mevalonate biosynthesis; (R)-mevalonate from acetyl-CoA: step 2/3. Functionally, catalyzes the condensation of acetyl-CoA with acetoacetyl-CoA to form 3-hydroxy-3-methylglutaryl-CoA (HMG-CoA). Functions in the mevalonate (MVA) pathway leading to isopentenyl diphosphate (IPP), a key precursor for the biosynthesis of isoprenoid compounds that are building blocks of archaeal membrane lipids. This is Hydroxymethylglutaryl-CoA synthase from Thermococcus sibiricus (strain DSM 12597 / MM 739).